The chain runs to 635 residues: DNA mismatch repair protein MutL (635 aa).

This sequence belongs to the DNA mismatch repair MutL/HexB family.

This protein is involved in the repair of mismatches in DNA. It is required for dam-dependent methyl-directed DNA mismatch repair. May act as a 'molecular matchmaker', a protein that promotes the formation of a stable complex between two or more DNA-binding proteins in an ATP-dependent manner without itself being part of a final effector complex. The protein is DNA mismatch repair protein MutL of Yersinia pestis bv. Antiqua (strain Angola).